The following is a 41-amino-acid chain: Large ribosomal subunit protein bL36 (41 aa).

Belongs to the bacterial ribosomal protein bL36 family.

The chain is Large ribosomal subunit protein bL36 from Rickettsia africae (strain ESF-5).